The primary structure comprises 296 residues: Small ribosomal subunit biogenesis GTPase RsgA (296 aa).

In terms of domain architecture, CP-type G spans 65–223 (INRIGRPAVA…LADTPGFSSI (159 aa)). Residues 114–117 (SKAD) and 166–174 (GQSGAGKST) contribute to the GTP site. Zn(2+) is bound by residues Cys-247, Cys-252, His-254, and Cys-260.

This sequence belongs to the TRAFAC class YlqF/YawG GTPase family. RsgA subfamily. As to quaternary structure, monomer. Associates with 30S ribosomal subunit, binds 16S rRNA. It depends on Zn(2+) as a cofactor.

Its subcellular location is the cytoplasm. In terms of biological role, one of several proteins that assist in the late maturation steps of the functional core of the 30S ribosomal subunit. Helps release RbfA from mature subunits. May play a role in the assembly of ribosomal proteins into the subunit. Circularly permuted GTPase that catalyzes slow GTP hydrolysis, GTPase activity is stimulated by the 30S ribosomal subunit. This is Small ribosomal subunit biogenesis GTPase RsgA from Lactobacillus acidophilus (strain ATCC 700396 / NCK56 / N2 / NCFM).